The primary structure comprises 315 residues: 4-hydroxy-3-methylbut-2-enyl diphosphate reductase (315 aa).

A [4Fe-4S] cluster-binding site is contributed by cysteine 12. (2E)-4-hydroxy-3-methylbut-2-enyl diphosphate contacts are provided by histidine 41 and histidine 74. Positions 41 and 74 each coordinate dimethylallyl diphosphate. Positions 41 and 74 each coordinate isopentenyl diphosphate. A [4Fe-4S] cluster-binding site is contributed by cysteine 96. A (2E)-4-hydroxy-3-methylbut-2-enyl diphosphate-binding site is contributed by histidine 124. Histidine 124 contacts dimethylallyl diphosphate. Residue histidine 124 participates in isopentenyl diphosphate binding. Catalysis depends on glutamate 126, which acts as the Proton donor. Threonine 168 contacts (2E)-4-hydroxy-3-methylbut-2-enyl diphosphate. Cysteine 198 is a [4Fe-4S] cluster binding site. 4 residues coordinate (2E)-4-hydroxy-3-methylbut-2-enyl diphosphate: serine 226, serine 227, asparagine 228, and serine 270. Residues serine 226, serine 227, asparagine 228, and serine 270 each coordinate dimethylallyl diphosphate. The isopentenyl diphosphate site is built by serine 226, serine 227, asparagine 228, and serine 270.

Belongs to the IspH family. [4Fe-4S] cluster serves as cofactor.

It carries out the reaction isopentenyl diphosphate + 2 oxidized [2Fe-2S]-[ferredoxin] + H2O = (2E)-4-hydroxy-3-methylbut-2-enyl diphosphate + 2 reduced [2Fe-2S]-[ferredoxin] + 2 H(+). The enzyme catalyses dimethylallyl diphosphate + 2 oxidized [2Fe-2S]-[ferredoxin] + H2O = (2E)-4-hydroxy-3-methylbut-2-enyl diphosphate + 2 reduced [2Fe-2S]-[ferredoxin] + 2 H(+). It functions in the pathway isoprenoid biosynthesis; dimethylallyl diphosphate biosynthesis; dimethylallyl diphosphate from (2E)-4-hydroxy-3-methylbutenyl diphosphate: step 1/1. Its pathway is isoprenoid biosynthesis; isopentenyl diphosphate biosynthesis via DXP pathway; isopentenyl diphosphate from 1-deoxy-D-xylulose 5-phosphate: step 6/6. Catalyzes the conversion of 1-hydroxy-2-methyl-2-(E)-butenyl 4-diphosphate (HMBPP) into a mixture of isopentenyl diphosphate (IPP) and dimethylallyl diphosphate (DMAPP). Acts in the terminal step of the DOXP/MEP pathway for isoprenoid precursor biosynthesis. The chain is 4-hydroxy-3-methylbut-2-enyl diphosphate reductase from Pseudomonas entomophila (strain L48).